The primary structure comprises 482 residues: Membrane-bound lytic murein transglycosylase F (482 aa).

The N-terminal stretch at 1–18 is a signal peptide; the sequence is MKGLFLRIITALALLFWA. Residues 19–267 form a non-LT domain region; sequence IDMVFPWQFL…NLKEKYLGHI (249 aa). The interval 268–482 is LT domain; it reads SQFDYVDTRS…NLEEIKENKD (215 aa). E312 is an active-site residue. A compositionally biased stretch (polar residues) spans 457-470; it reads ENQTTNDNANNESA. The interval 457–482 is disordered; sequence ENQTTNDNANNESAVKNLEEIKENKD. The segment covering 473–482 has biased composition (basic and acidic residues); it reads NLEEIKENKD.

It in the N-terminal section; belongs to the bacterial solute-binding protein 3 family. The protein in the C-terminal section; belongs to the transglycosylase Slt family.

It localises to the cell outer membrane. It catalyses the reaction Exolytic cleavage of the (1-&gt;4)-beta-glycosidic linkage between N-acetylmuramic acid (MurNAc) and N-acetylglucosamine (GlcNAc) residues in peptidoglycan, from either the reducing or the non-reducing ends of the peptidoglycan chains, with concomitant formation of a 1,6-anhydrobond in the MurNAc residue.. Functionally, murein-degrading enzyme that degrades murein glycan strands and insoluble, high-molecular weight murein sacculi, with the concomitant formation of a 1,6-anhydromuramoyl product. Lytic transglycosylases (LTs) play an integral role in the metabolism of the peptidoglycan (PG) sacculus. Their lytic action creates space within the PG sacculus to allow for its expansion as well as for the insertion of various structures such as secretion systems and flagella. The sequence is that of Membrane-bound lytic murein transglycosylase F from Haemophilus influenzae (strain 86-028NP).